The chain runs to 69 residues: ATP synthase subunits region ORF 1 (69 aa).

The protein is ATP synthase subunits region ORF 1 of Fuscovulum blasticum (Rhodobacter blasticus).